Reading from the N-terminus, the 47-residue chain is Delta-actitoxin-Cgg1b (47 aa).

Pro-3 carries the hydroxyproline modification. 3 cysteine pairs are disulfide-bonded: Cys-4-Cys-44, Cys-6-Cys-34, and Cys-27-Cys-45.

It belongs to the sea anemone sodium channel inhibitory toxin family. Type I subfamily.

The protein resides in the secreted. The protein localises to the nematocyst. Binds voltage-dependently at site 3 of sodium channels (Nav) and inhibits the inactivation, thereby blocking neuronal transmission. The chain is Delta-actitoxin-Cgg1b from Condylactis gigantea (Giant Caribbean anemone).